The chain runs to 501 residues: Cytochrome P450 7A1 (501 aa).

The chain crosses the membrane as a helical span at residues 4–24 (ISLLGGIVTAVCCCLWLLLGM). C441 provides a ligand contact to heme.

The protein belongs to the cytochrome P450 family. Heme serves as cofactor.

The protein localises to the endoplasmic reticulum membrane. Its subcellular location is the microsome membrane. It carries out the reaction cholesterol + reduced [NADPH--hemoprotein reductase] + O2 = 7alpha-hydroxycholesterol + oxidized [NADPH--hemoprotein reductase] + H2O + H(+). The enzyme catalyses 4beta-hydroxycholesterol + reduced [NADPH--hemoprotein reductase] + O2 = 4beta,7alpha-dihydroxycholesterol + oxidized [NADPH--hemoprotein reductase] + H2O + H(+). The catalysed reaction is lathosterol + reduced [NADPH--hemoprotein reductase] + O2 = 7alpha,8alpha-epoxy-5alpha-cholestan-3beta-ol + oxidized [NADPH--hemoprotein reductase] + H2O + H(+). It catalyses the reaction lathosterol + reduced [NADPH--hemoprotein reductase] + O2 = 5alpha-cholestan-7-oxo-3beta-ol + oxidized [NADPH--hemoprotein reductase] + H2O + H(+). It carries out the reaction 7-dehydrocholesterol + reduced [NADPH--hemoprotein reductase] + O2 = 7-oxocholesterol + oxidized [NADPH--hemoprotein reductase] + H2O + H(+). The enzyme catalyses (24S)-hydroxycholesterol + reduced [NADPH--hemoprotein reductase] + O2 = (24S)-7alpha-dihydroxycholesterol + oxidized [NADPH--hemoprotein reductase] + H2O + H(+). The catalysed reaction is (24R)-hydroxycholesterol + reduced [NADPH--hemoprotein reductase] + O2 = (24R)-7alpha-dihydroxycholesterol + oxidized [NADPH--hemoprotein reductase] + H2O + H(+). The protein operates within lipid metabolism; bile acid biosynthesis. It functions in the pathway steroid metabolism; cholesterol degradation. A cytochrome P450 monooxygenase involved in the metabolism of endogenous cholesterol and its oxygenated derivatives (oxysterols). Mechanistically, uses molecular oxygen inserting one oxygen atom into a substrate, and reducing the second into a water molecule, with two electrons provided by NADPH via cytochrome P450 reductase (CPR; NADPH-ferrihemoprotein reductase). Functions as a critical regulatory enzyme of bile acid biosynthesis and cholesterol homeostasis. Catalyzes the hydroxylation of carbon hydrogen bond at 7-alpha position of cholesterol, a rate-limiting step in cholesterol catabolism and bile acid biosynthesis. 7-alpha hydroxylates several oxysterols, including 4beta-hydroxycholesterol and 24-hydroxycholesterol. Catalyzes the oxidation of the 7,8 double bond of 7-dehydrocholesterol and lathosterol with direct and predominant formation of the 7-keto derivatives. The chain is Cytochrome P450 7A1 (CYP7A1) from Sus scrofa (Pig).